A 116-amino-acid polypeptide reads, in one-letter code: U16-barytoxin-Tl1a (116 aa).

The N-terminal stretch at 1–20 (MKTIIVFLSLLVLATKFGDA) is a signal peptide. A propeptide spanning residues 21 to 74 (KEGVNQKQKKEVTQNEFREEYLNEMAAMSLVQQLEAIERALFENEAGRNSRQKR) is cleaved from the precursor. 3 cysteine pairs are disulfide-bonded: C75–C90, C82–C95, and C89–C110.

This sequence belongs to the neurotoxin 14 (magi-1) family. 06 (ICK-Trit) subfamily. As to expression, expressed by the venom gland.

It is found in the secreted. Its function is as follows. Ion channel inhibitor. This is U16-barytoxin-Tl1a from Trittame loki (Brush-footed trapdoor spider).